A 393-amino-acid chain; its full sequence is Chorismate synthase (393 aa).

Positions 40 and 46 each coordinate NADP(+). FMN-binding positions include 129–131 (RSS), 249–250 (QA), Gly301, 316–320 (KPIPT), and Arg342.

This sequence belongs to the chorismate synthase family. As to quaternary structure, homotetramer. Requires FMNH2 as cofactor.

It catalyses the reaction 5-O-(1-carboxyvinyl)-3-phosphoshikimate = chorismate + phosphate. The protein operates within metabolic intermediate biosynthesis; chorismate biosynthesis; chorismate from D-erythrose 4-phosphate and phosphoenolpyruvate: step 7/7. Catalyzes the anti-1,4-elimination of the C-3 phosphate and the C-6 proR hydrogen from 5-enolpyruvylshikimate-3-phosphate (EPSP) to yield chorismate, which is the branch point compound that serves as the starting substrate for the three terminal pathways of aromatic amino acid biosynthesis. This reaction introduces a second double bond into the aromatic ring system. The chain is Chorismate synthase from Geobacter metallireducens (strain ATCC 53774 / DSM 7210 / GS-15).